The chain runs to 211 residues: Outer-membrane lipoprotein carrier protein (211 aa).

Residues 1–24 form the signal peptide; that stretch reads MRNRILVSACAALAMFAMQAPAHA.

Belongs to the LolA family. As to quaternary structure, monomer.

The protein resides in the periplasm. Functionally, participates in the translocation of lipoproteins from the inner membrane to the outer membrane. Only forms a complex with a lipoprotein if the residue after the N-terminal Cys is not an aspartate (The Asp acts as a targeting signal to indicate that the lipoprotein should stay in the inner membrane). This Cupriavidus taiwanensis (strain DSM 17343 / BCRC 17206 / CCUG 44338 / CIP 107171 / LMG 19424 / R1) (Ralstonia taiwanensis (strain LMG 19424)) protein is Outer-membrane lipoprotein carrier protein.